The sequence spans 204 residues: Outer-membrane lipoprotein carrier protein (204 aa).

A signal peptide spans 1–21 (MKKLLVACCVVSGMMSASVLA).

Belongs to the LolA family. Monomer.

Its subcellular location is the periplasm. Functionally, participates in the translocation of lipoproteins from the inner membrane to the outer membrane. Only forms a complex with a lipoprotein if the residue after the N-terminal Cys is not an aspartate (The Asp acts as a targeting signal to indicate that the lipoprotein should stay in the inner membrane). This is Outer-membrane lipoprotein carrier protein from Edwardsiella ictaluri (strain 93-146).